We begin with the raw amino-acid sequence, 433 residues long: Histidinol dehydrogenase 2 (433 aa).

Residues tyrosine 130, glutamine 192, and asparagine 215 each contribute to the NAD(+) site. Substrate-binding residues include serine 238, glutamine 260, and histidine 263. Glutamine 260 and histidine 263 together coordinate Zn(2+). Catalysis depends on proton acceptor residues glutamate 328 and histidine 329. Substrate-binding residues include histidine 329, aspartate 362, glutamate 416, and histidine 421. Aspartate 362 is a binding site for Zn(2+). Position 421 (histidine 421) interacts with Zn(2+).

The protein belongs to the histidinol dehydrogenase family. The cofactor is Zn(2+).

It carries out the reaction L-histidinol + 2 NAD(+) + H2O = L-histidine + 2 NADH + 3 H(+). It participates in amino-acid biosynthesis; L-histidine biosynthesis; L-histidine from 5-phospho-alpha-D-ribose 1-diphosphate: step 9/9. Catalyzes the sequential NAD-dependent oxidations of L-histidinol to L-histidinaldehyde and then to L-histidine. This Trichormus variabilis (strain ATCC 29413 / PCC 7937) (Anabaena variabilis) protein is Histidinol dehydrogenase 2.